Reading from the N-terminus, the 894-residue chain is UPF0182 protein GSU2333 (894 aa).

A run of 7 helical transmembrane segments spans residues 6-26 (FLLI…LITF), 50-70 (VGAG…NLYF), 98-118 (MVQM…LLAG), 162-182 (KGFV…VYFF), 203-223 (LAIL…LDAV), 250-270 (ILTL…WKGA), and 275-295 (LIPP…YPAM).

It belongs to the UPF0182 family.

The protein resides in the cell membrane. This chain is UPF0182 protein GSU2333, found in Geobacter sulfurreducens (strain ATCC 51573 / DSM 12127 / PCA).